The following is a 274-amino-acid chain: 2,3,4,5-tetrahydropyridine-2,6-dicarboxylate N-succinyltransferase (274 aa).

The substrate site is built by Arg104 and Asp141.

The protein belongs to the transferase hexapeptide repeat family. Homotrimer.

The protein localises to the cytoplasm. The catalysed reaction is (S)-2,3,4,5-tetrahydrodipicolinate + succinyl-CoA + H2O = (S)-2-succinylamino-6-oxoheptanedioate + CoA. Its pathway is amino-acid biosynthesis; L-lysine biosynthesis via DAP pathway; LL-2,6-diaminopimelate from (S)-tetrahydrodipicolinate (succinylase route): step 1/3. The protein is 2,3,4,5-tetrahydropyridine-2,6-dicarboxylate N-succinyltransferase of Idiomarina loihiensis (strain ATCC BAA-735 / DSM 15497 / L2-TR).